A 721-amino-acid chain; its full sequence is 1,4-alpha-glucan branching enzyme GlgB (721 aa).

The active-site Nucleophile is the Asp404. Residue Glu457 is the Proton donor of the active site.

The protein belongs to the glycosyl hydrolase 13 family. GlgB subfamily. Monomer.

It carries out the reaction Transfers a segment of a (1-&gt;4)-alpha-D-glucan chain to a primary hydroxy group in a similar glucan chain.. It functions in the pathway glycan biosynthesis; glycogen biosynthesis. In terms of biological role, catalyzes the formation of the alpha-1,6-glucosidic linkages in glycogen by scission of a 1,4-alpha-linked oligosaccharide from growing alpha-1,4-glucan chains and the subsequent attachment of the oligosaccharide to the alpha-1,6 position. The polypeptide is 1,4-alpha-glucan branching enzyme GlgB (Bradyrhizobium diazoefficiens (strain JCM 10833 / BCRC 13528 / IAM 13628 / NBRC 14792 / USDA 110)).